Reading from the N-terminus, the 245-residue chain is DNA repair protein RecO (245 aa).

It belongs to the RecO family.

Its function is as follows. Involved in DNA repair and RecF pathway recombination. The polypeptide is DNA repair protein RecO (Erwinia tasmaniensis (strain DSM 17950 / CFBP 7177 / CIP 109463 / NCPPB 4357 / Et1/99)).